The sequence spans 146 residues: Angiogenin (146 aa).

The N-terminal stretch at Met-1–Ala-24 is a signal peptide. Gln-25 is subject to Pyrrolidone carboxylic acid. His-37 acts as the Proton acceptor in catalysis. Arg-45 is a tRNA binding site. Disulfide bonds link Cys-50/Cys-105, Cys-63/Cys-116, and Cys-81/Cys-131. Residues Arg-55 to Leu-59 carry the Nucleolar localization signal motif. The tRNA site is built by Cys-105 and Ile-127. The active-site Proton donor is the His-138.

Belongs to the pancreatic ribonuclease family. Homodimer. Interacts with RNH1; inhibiting ANG ribonuclease activity. Interacts with PCNA.

It is found in the secreted. Its subcellular location is the nucleus. It localises to the nucleolus. The protein resides in the cytoplasm. The protein localises to the stress granule. With respect to regulation, has weak tRNA ribonuclease activity by itself due to partial autoinhibition by its C-terminus, which folds into a short alpha-helix that partially occludes the substrate-binding site. In absence of stress, the ribonuclease activity is inhibited by RNH1 in the cytoplasm. In response to stress, dissociates from RNH1 in the cytoplasm and associates with cytoplasmic ribosomes with vacant A-sites: ribosomes directly activate the tRNA ribonuclease activity of ANG by refolding the C-terminal alpha-helix. In response to stress, the angiogenic activity of ANG is inhibited by RNH1 in the nucleus. In terms of biological role, secreted ribonuclease that can either promote or restrict cell proliferation of target cells, depending on the context. Endocytosed in target cells via its receptor PLXNB2 and translocates to the cytoplasm or nucleus. Under stress conditions, localizes to the cytoplasm and promotes the assembly of stress granules (SGs): specifically cleaves a subset of tRNAs within anticodon loops to produce tRNA-derived stress-induced fragments (tiRNAs), resulting in translation repression and inhibition of cell proliferation. tiRNas also prevent formation of apoptosome, thereby promoting cell survival. Preferentially cleaves RNAs between a pyrimidine and an adenosine residue, suggesting that it cleaves the anticodon loop of tRNA(Ala) (32-UUAGCAU-38) after positions 33 and 36. Cleaves a subset of tRNAs, including tRNA(Ala), tRNA(Glu), tRNA(Gly), tRNA(Lys), tRNA(Val), tRNA(His), tRNA(Asp) and tRNA(Sec). Under growth conditions and in differentiated cells, translocates to the nucleus and stimulates ribosomal RNA (rRNA) transcription, including that containing the initiation site sequences of 45S rRNA, thereby promoting cell growth and proliferation. Angiogenin induces vascularization of normal and malignant tissues via its ability to promote rRNA transcription. Involved in hematopoietic stem and progenitor cell (HSPC) growth and survival by promoting rRNA transcription in growth conditions and inhibiting translation in response to stress, respectively. Mediates the crosstalk between myeloid and intestinal epithelial cells to protect the intestinal epithelial barrier integrity: secreted by myeloid cells and promotes intestinal epithelial cells proliferation and survival. Also mediates osteoclast-endothelial cell crosstalk in growing bone: produced by osteoclasts and protects the neighboring vascular cells against senescence by promoting rRNA transcription. The polypeptide is Angiogenin (ANG) (Trachypithecus francoisi (Francois' leaf monkey)).